A 428-amino-acid chain; its full sequence is MSLDLPPPPARGCRSTEVLKERGQREVFCGLTGIIWLHRKMQDAFFLVVGSRTCAHLLQSAAGVMIFAEPRFGTAVLEEKDLAGLADANAELDREVDRLLARRPDIRQLFLVGSCPSEVIKLDLHRAAERLSAHHGPAVRVYNFSGSGIETTFTQGEDACLASIVPTLPATEARELLLVGALPDVVEDQAVSLLTQLGIGPVRCLPAHHAAEAPGVGPNTVFALVQPFLGDTHGALTRRGARHIAAPFPFGEEGTTLWLKAIADEFGVSADTFEAVTAAPRARARKAVAAASEGLRGKSVFFLPDSQLEPSLARFLTRECGMSAVEVGTPFLHRGILGPDLDLIAEGPVLSEGQDVERQLDRVRAARPDLTVCGLGLANPLEAEGFTTKWAIELVFTPVHFYEQAGDLAGLFSRPVRRRAILRREAAE.

Cys-29, Cys-54, and Cys-115 together coordinate [4Fe-4S] cluster.

The protein belongs to the BchN/ChlN family. In terms of assembly, protochlorophyllide reductase is composed of three subunits; BchL, BchN and BchB. Forms a heterotetramer of two BchB and two BchN subunits. [4Fe-4S] cluster is required as a cofactor.

The enzyme catalyses chlorophyllide a + oxidized 2[4Fe-4S]-[ferredoxin] + 2 ADP + 2 phosphate = protochlorophyllide a + reduced 2[4Fe-4S]-[ferredoxin] + 2 ATP + 2 H2O. The protein operates within porphyrin-containing compound metabolism; bacteriochlorophyll biosynthesis (light-independent). Its function is as follows. Component of the dark-operative protochlorophyllide reductase (DPOR) that uses Mg-ATP and reduced ferredoxin to reduce ring D of protochlorophyllide (Pchlide) to form chlorophyllide a (Chlide). This reaction is light-independent. The NB-protein (BchN-BchB) is the catalytic component of the complex. This Cereibacter sphaeroides (strain ATCC 17023 / DSM 158 / JCM 6121 / CCUG 31486 / LMG 2827 / NBRC 12203 / NCIMB 8253 / ATH 2.4.1.) (Rhodobacter sphaeroides) protein is Light-independent protochlorophyllide reductase subunit N.